The following is a 420-amino-acid chain: Histidine--tRNA ligase (420 aa).

This sequence belongs to the class-II aminoacyl-tRNA synthetase family. Homodimer.

The protein localises to the cytoplasm. It catalyses the reaction tRNA(His) + L-histidine + ATP = L-histidyl-tRNA(His) + AMP + diphosphate + H(+). This is Histidine--tRNA ligase from Streptomyces avermitilis (strain ATCC 31267 / DSM 46492 / JCM 5070 / NBRC 14893 / NCIMB 12804 / NRRL 8165 / MA-4680).